The sequence spans 503 residues: Variant surface glycoprotein AnTaT 1.1 (503 aa).

Residues 1–29 (MVTKERNAALKIVMLVASALTLHPQQALA) form the signal peptide. Disulfide bonds link Cys-45-Cys-172 and Cys-154-Cys-209. N-linked (GlcNAc...) asparagine glycosylation is present at Asn-113. N-linked (GlcNAc...) asparagine glycans are attached at residues Asn-419 and Asn-432. A lipid anchor (GPI-anchor amidated aspartate) is attached at Asp-480. Positions 481–503 (SSILLTKNFALSVVSAALVALLF) are cleaved as a propeptide — removed in mature form.

Its subcellular location is the cell membrane. Its function is as follows. VSG forms a coat on the surface of the parasite. The trypanosome evades the immune response of the host by expressing a series of antigenically distinct VSGs from an estimated 1000 VSG genes. This is Variant surface glycoprotein AnTaT 1.1 from Trypanosoma brucei brucei.